We begin with the raw amino-acid sequence, 157 residues long: Ribosome maturation factor RimP (157 aa).

This sequence belongs to the RimP family.

The protein resides in the cytoplasm. Required for maturation of 30S ribosomal subunits. This Streptococcus thermophilus (strain ATCC BAA-491 / LMD-9) protein is Ribosome maturation factor RimP.